Here is a 110-residue protein sequence, read N- to C-terminus: Membrane-associated protein slr1513 (110 aa).

It localises to the cellular thylakoid membrane. It is found in the cell membrane. This chain is Membrane-associated protein slr1513, found in Synechocystis sp. (strain ATCC 27184 / PCC 6803 / Kazusa).